We begin with the raw amino-acid sequence, 277 residues long: Large ribosomal subunit protein uL2 (277 aa).

Disordered regions lie at residues 34 to 55 and 213 to 277; these read LQPL…RHHG and WKGI…RKKK.

The protein belongs to the universal ribosomal protein uL2 family. As to quaternary structure, part of the 50S ribosomal subunit. Forms a bridge to the 30S subunit in the 70S ribosome.

Functionally, one of the primary rRNA binding proteins. Required for association of the 30S and 50S subunits to form the 70S ribosome, for tRNA binding and peptide bond formation. It has been suggested to have peptidyltransferase activity; this is somewhat controversial. Makes several contacts with the 16S rRNA in the 70S ribosome. The protein is Large ribosomal subunit protein uL2 of Staphylococcus haemolyticus (strain JCSC1435).